We begin with the raw amino-acid sequence, 307 residues long: Putative S-adenosyl-L-methionine-dependent methyltransferase Mflv_5025 (307 aa).

S-adenosyl-L-methionine-binding positions include Asp130 and 159–160 (DL).

The protein belongs to the UPF0677 family.

Its function is as follows. Exhibits S-adenosyl-L-methionine-dependent methyltransferase activity. This chain is Putative S-adenosyl-L-methionine-dependent methyltransferase Mflv_5025, found in Mycolicibacterium gilvum (strain PYR-GCK) (Mycobacterium gilvum (strain PYR-GCK)).